The following is a 309-amino-acid chain: Spermatid maturation protein 1 (309 aa).

Residues 29–49 (VLLLLGLIICINISINIVTLL) traverse the membrane as a helical segment. Residues 209–231 (PPPPSPEAPSHKNGGEGAVPEAE) are disordered. A coiled-coil region spans residues 259-285 (RIVYDARDMRRRLRELTREVEALSGCY).

The protein localises to the membrane. It localises to the cytoplasm. Functionally, required for proper cytoplasm removal during spermatogenesis. The polypeptide is Spermatid maturation protein 1 (SPEM1) (Homo sapiens (Human)).